Reading from the N-terminus, the 243-residue chain is Venom nerve growth factor (243 aa).

A signal peptide spans 1 to 18 (MSMLCYTLIIAFLIGIWA). The propeptide occupies 19 to 125 (APKSEDNVPL…TLNRNIWANN (107 aa)). Over residues 47-66 (GLKTSRNTDQHHPTPKKSED) the composition is skewed to basic and acidic residues. Residues 47–70 (GLKTSRNTDQHHPTPKKSEDQELG) are disordered. 3 cysteine pairs are disulfide-bonded: C139–C204, C182–C232, and C192–C234. N-linked (GlcNAc...) asparagine glycosylation occurs at N148.

This sequence belongs to the NGF-beta family. In terms of assembly, homodimer. In terms of tissue distribution, expressed by the venom gland.

It is found in the secreted. Nerve growth factor is important for the development and maintenance of the sympathetic and sensory nervous systems. It stimulates division and differentiation of sympathetic and embryonic sensory neurons as well as basal forebrain cholinergic neurons in the brain. Its relevance in the snake venom is not clear. However, it has been shown to inhibit metalloproteinase-dependent proteolysis of platelet glycoprotein Ib alpha, suggesting a metalloproteinase inhibition to prevent metalloprotease autodigestion and/or protection against prey proteases. Binds a lipid between the two protein chains in the homodimer. The lipid-bound form promotes histamine relase from mouse mast cells, contrary to the lipid-free form. This Bungarus multicinctus (Many-banded krait) protein is Venom nerve growth factor.